A 166-amino-acid chain; its full sequence is Ribosome-binding factor A (166 aa).

Residues valine 119 to histidine 166 form a disordered region. Positions glutamate 143–aspartate 154 are enriched in acidic residues.

The protein belongs to the RbfA family. Monomer. Binds 30S ribosomal subunits, but not 50S ribosomal subunits or 70S ribosomes.

It localises to the cytoplasm. One of several proteins that assist in the late maturation steps of the functional core of the 30S ribosomal subunit. Associates with free 30S ribosomal subunits (but not with 30S subunits that are part of 70S ribosomes or polysomes). Required for efficient processing of 16S rRNA. May interact with the 5'-terminal helix region of 16S rRNA. This chain is Ribosome-binding factor A, found in Clavibacter michiganensis subsp. michiganensis (strain NCPPB 382).